A 468-amino-acid chain; its full sequence is MRKWYFILLAGVLTSVILAFVYDKTKANEEGSGDYLYVSPNGSDQNEGTKEKPFRTLAHASEKAAAGTTVMIREGTYHETLDVKHSGTDGKPITFRNYENENVVISGESVANAEYETPLIRIHDKHDIAISGLTIQDLSVSSEEATAIGIYVSGSSSHIAIKDNHIRGIKTTADEGNAHGIAVYGTGSMKDIRIEDNTVEKLTLGASEAVVLNGNIDGFTVAGNVVRNNNNIGIDLIGYEGTADKNDYVRNGVVENNTVYQNSTYGNPAYGDEYSAGGIYVDGGHDIEIKNNTVYDNDIGIEATSEHKGKYANAIQITDNKVYNNAYTGISIGGYDKKRGGTSNSLIARNIMYRNDTKGLYGGQLLLQYDTKNNTIEKNILTAGDSRLFIGNDFTENEGNTVNHNVYHKEADQDGIWMWKKKEYDSFSSYRKATKNDQQSIYADPMFRDEASYDFSLDPDSPARPVIE.

An N-terminal signal peptide occupies residues 1–27; that stretch reads MRKWYFILLAGVLTSVILAFVYDKTKA. PbH1 repeat units follow at residues 125-154, 156-185, 189-214, 216-238, 249-283, 284-305, 312-334, and 397-420; these read KHDI…YVSG, SSHI…AVYG, MKDI…VLNG, IDGF…DLIG, VRNG…YVDG, GHDI…EATS, ANAI…SIGG, and NEGN…WMWK.

The protein resides in the secreted. This is an uncharacterized protein from Bacillus subtilis (strain 168).